A 212-amino-acid polypeptide reads, in one-letter code: Adapter protein MecA 2 (212 aa).

This sequence belongs to the MecA family. In terms of assembly, homodimer.

Its function is as follows. Enables the recognition and targeting of unfolded and aggregated proteins to the ClpC protease or to other proteins involved in proteolysis. Acts negatively in the development of competence by binding ComK and recruiting it to the ClpCP protease. When overexpressed, inhibits sporulation. Also involved in Spx degradation by ClpC. The protein is Adapter protein MecA 2 (mecA2) of Halalkalibacterium halodurans (strain ATCC BAA-125 / DSM 18197 / FERM 7344 / JCM 9153 / C-125) (Bacillus halodurans).